The sequence spans 266 residues: MPPRAKKSLGQNFLKDRNIAARIAAQLHIGPDDWVIEIGPGPGALTRHIHAAGPARLFLLEKDHHWAREHHLHPLAGTPEAQVVLTDALLFPWERLDAAHPWKVIGNLPYNVASPLMWDICSRAPGLVRASFMIQKEVGERIVAAPGSRQYGALSVWLQCFTKPEWCFVVPPHVFTPRPKVDSAVLAFTPRTDRPDAVQSKRLAHVLRLCFQQRRKQLQGILRPHVGGDASALLAELGIDPAARPETLSPERFIALGEAVAMSAIA.

S-adenosyl-L-methionine-binding residues include Asn12, Leu14, Gly39, Glu61, Asp87, and Asn107.

Belongs to the class I-like SAM-binding methyltransferase superfamily. rRNA adenine N(6)-methyltransferase family. RsmA subfamily.

The protein localises to the cytoplasm. The catalysed reaction is adenosine(1518)/adenosine(1519) in 16S rRNA + 4 S-adenosyl-L-methionine = N(6)-dimethyladenosine(1518)/N(6)-dimethyladenosine(1519) in 16S rRNA + 4 S-adenosyl-L-homocysteine + 4 H(+). Its function is as follows. Specifically dimethylates two adjacent adenosines (A1518 and A1519) in the loop of a conserved hairpin near the 3'-end of 16S rRNA in the 30S particle. May play a critical role in biogenesis of 30S subunits. This chain is Ribosomal RNA small subunit methyltransferase A, found in Nitratidesulfovibrio vulgaris (strain DP4) (Desulfovibrio vulgaris).